The chain runs to 390 residues: Pyruvate dehydrogenase E1 component subunit alpha, somatic form, mitochondrial (390 aa).

The N-terminal 29 residues, 1 to 29 (MRKMLAAVSRVLSGASQKPASRVLVASRN), are a transit peptide targeting the mitochondrion. The residue at position 63 (Lys63) is an N6-acetyllysine; alternate. Residue Lys63 is modified to N6-succinyllysine; alternate. Pyruvate contacts are provided by His92, Tyr118, Arg119, Ala157, Gly165, Val167, Asp196, Gly197, Ala198, Asn225, and Tyr227. Residues Tyr118 and Arg119 each contribute to the thiamine diphosphate site. Thiamine diphosphate is bound by residues Gly165, Val167, Asp196, Gly197, Ala198, and Asn225. Mg(2+) is bound at residue Asp196. Residues Asn225 and Tyr227 each coordinate Mg(2+). Position 232 is a phosphoserine; by PDK1 (Ser232). Lys244 carries the N6-acetyllysine; alternate modification. Residue Lys244 is modified to N6-succinyllysine; alternate. An N6-succinyllysine modification is found at Lys277. His292 is a thiamine diphosphate binding site. Ser293 is modified (phosphoserine; by PDK1, PDK2, PDK3 and PDK4). Ser295 carries the phosphoserine modification. Phosphoserine; by PDK1, PDK2, PDK3 and PDK4 is present on Ser300. Tyr301 is subject to Phosphotyrosine. Lys313 is modified (N6-acetyllysine; alternate). Lys313 is subject to N6-succinyllysine; alternate. Lys321 and Lys336 each carry N6-acetyllysine. Lys385 bears the N6-succinyllysine mark.

Heterotetramer of two PDHA1 and two PDHB subunits. The heterotetramer interacts with DLAT, and is part of the multimeric pyruvate dehydrogenase complex that contains multiple copies of pyruvate dehydrogenase (E1), dihydrolipoamide acetyltransferase (DLAT, E2) and lipoamide dehydrogenase (DLD, E3). These subunits are bound to an inner core composed of about 48 DLAT and 12 PDHX molecules. Thiamine diphosphate serves as cofactor. The cofactor is Mg(2+). Post-translationally, phosphorylation at Ser-232, Ser-293 and Ser-300 by PDK family kinases inactivates the enzyme; for this phosphorylation at a single site is sufficient. Phosphorylation at Ser-293 interferes with access to active site, and thereby inactivates the enzyme. Dephosphorylation at all three sites, i.e. at Ser-232, Ser-293 and Ser-300, is required for reactivation. In terms of processing, acetylation alters the phosphorylation pattern. Deacetylated by SIRT3.

It is found in the mitochondrion matrix. It carries out the reaction N(6)-[(R)-lipoyl]-L-lysyl-[protein] + pyruvate + H(+) = N(6)-[(R)-S(8)-acetyldihydrolipoyl]-L-lysyl-[protein] + CO2. Pyruvate dehydrogenase activity is inhibited by phosphorylation of PDHA1; it is reactivated by dephosphorylation. In terms of biological role, the pyruvate dehydrogenase complex catalyzes the overall conversion of pyruvate to acetyl-CoA and CO(2), and thereby links the glycolytic pathway to the tricarboxylic cycle. The chain is Pyruvate dehydrogenase E1 component subunit alpha, somatic form, mitochondrial (PDHA1) from Macaca fascicularis (Crab-eating macaque).